The sequence spans 296 residues: Probable deoxyuridine 5'-triphosphate nucleotidohydrolase (296 aa).

Residues 66–102 (EIDKNIVKNLEDKVNCLEQDVQYLKNELKKKDADWQQ) are a coiled coil.

It belongs to the dUTPase family.

It carries out the reaction dUTP + H2O = dUMP + diphosphate + H(+). Its pathway is pyrimidine metabolism; dUMP biosynthesis; dUMP from dCTP (dUTP route): step 2/2. In terms of biological role, this enzyme is involved in nucleotide metabolism: it produces dUMP, the immediate precursor of thymidine nucleotides and it decreases the intracellular concentration of dUTP so that uracil cannot be incorporated into DNA. The polypeptide is Probable deoxyuridine 5'-triphosphate nucleotidohydrolase (Acheta domesticus (House cricket)).